A 401-amino-acid polypeptide reads, in one-letter code: Zinc finger CCHC domain-containing protein 12 (401 aa).

Disordered regions lie at residues 1-20 and 270-292; these read MASILSRMGNSRGQNSPLPP and DSDEDVILVEPDDPPLPSSSAGP. Positions 270 to 282 are enriched in acidic residues; that stretch reads DSDEDVILVEPDD. Residues 345–362 form a CCHC-type zinc finger; it reads VHCSHCGEEGHSKETCDN.

This sequence belongs to the ZCCHC12 family. Interacts with SMAD1 and CREB-binding protein (CBP). Forms a protein-DNA complex through its association with SMAD1.

Transcriptional coactivator in the bone morphogenetic protein (BMP)-signaling pathway. It positively modulates BMP signaling by interacting with SMAD1 and associating with CBP in the transcription complex. It contributes to the BMP-induced enhancement of cholinergic-neuron-specific gene expression. The protein is Zinc finger CCHC domain-containing protein 12 (Zcchc12) of Rattus norvegicus (Rat).